The chain runs to 343 residues: GTPase Obg (343 aa).

Positions Met-1–Ile-159 constitute an Obg domain. The 168-residue stretch at Ala-160 to Ala-327 folds into the OBG-type G domain. GTP contacts are provided by residues Gly-166–Ser-173, Phe-191–His-195, Asp-212–Gly-215, Ser-279–Asp-282, and Ser-308–Val-310. Positions 173 and 193 each coordinate Mg(2+).

The protein belongs to the TRAFAC class OBG-HflX-like GTPase superfamily. OBG GTPase family. As to quaternary structure, monomer. The cofactor is Mg(2+).

The protein resides in the cytoplasm. Functionally, an essential GTPase which binds GTP, GDP and possibly (p)ppGpp with moderate affinity, with high nucleotide exchange rates and a fairly low GTP hydrolysis rate. Plays a role in control of the cell cycle, stress response, ribosome biogenesis and in those bacteria that undergo differentiation, in morphogenesis control. This is GTPase Obg from Mesorhizobium japonicum (strain LMG 29417 / CECT 9101 / MAFF 303099) (Mesorhizobium loti (strain MAFF 303099)).